The sequence spans 298 residues: Glycine--tRNA ligase alpha subunit (298 aa).

Belongs to the class-II aminoacyl-tRNA synthetase family. In terms of assembly, tetramer of two alpha and two beta subunits.

It localises to the cytoplasm. It catalyses the reaction tRNA(Gly) + glycine + ATP = glycyl-tRNA(Gly) + AMP + diphosphate. The sequence is that of Glycine--tRNA ligase alpha subunit from Helicobacter pylori (strain P12).